The sequence spans 290 residues: 33 kDa chaperonin (290 aa).

Cystine bridges form between Cys235–Cys237 and Cys268–Cys271.

The protein belongs to the HSP33 family. Under oxidizing conditions two disulfide bonds are formed involving the reactive cysteines. Under reducing conditions zinc is bound to the reactive cysteines and the protein is inactive.

The protein resides in the cytoplasm. Redox regulated molecular chaperone. Protects both thermally unfolding and oxidatively damaged proteins from irreversible aggregation. Plays an important role in the bacterial defense system toward oxidative stress. The sequence is that of 33 kDa chaperonin from Streptococcus pyogenes serotype M5 (strain Manfredo).